The following is a 906-amino-acid chain: Protein translocase subunit SecA (906 aa).

ATP contacts are provided by residues Gln86, Gly104 to Thr108, and Asp499. A disordered region spans residues Lys862–Asn887. Zn(2+) is bound by residues Cys890, Cys892, Cys901, and His902.

It belongs to the SecA family. Monomer and homodimer. Part of the essential Sec protein translocation apparatus which comprises SecA, SecYEG and auxiliary proteins SecDF-YajC and YidC. The cofactor is Zn(2+).

It is found in the cell inner membrane. It localises to the cytoplasm. It carries out the reaction ATP + H2O + cellular proteinSide 1 = ADP + phosphate + cellular proteinSide 2.. Functionally, part of the Sec protein translocase complex. Interacts with the SecYEG preprotein conducting channel. Has a central role in coupling the hydrolysis of ATP to the transfer of proteins into and across the cell membrane, serving both as a receptor for the preprotein-SecB complex and as an ATP-driven molecular motor driving the stepwise translocation of polypeptide chains across the membrane. This is Protein translocase subunit SecA from Rickettsia peacockii (strain Rustic).